The primary structure comprises 234 residues: Endonuclease V (234 aa).

Mg(2+) is bound by residues Asp-42 and Asp-108.

This sequence belongs to the endonuclease V family. Requires Mg(2+) as cofactor.

The protein localises to the cytoplasm. It catalyses the reaction Endonucleolytic cleavage at apurinic or apyrimidinic sites to products with a 5'-phosphate.. In terms of biological role, DNA repair enzyme involved in the repair of deaminated bases. Selectively cleaves double-stranded DNA at the second phosphodiester bond 3' to a deoxyinosine leaving behind the intact lesion on the nicked DNA. This Geotalea uraniireducens (strain Rf4) (Geobacter uraniireducens) protein is Endonuclease V.